Reading from the N-terminus, the 182-residue chain is Peptide deformylase (182 aa).

2 residues coordinate Fe cation: C100 and H142. Residue E143 is part of the active site. H146 provides a ligand contact to Fe cation.

Belongs to the polypeptide deformylase family. Fe(2+) is required as a cofactor.

The enzyme catalyses N-terminal N-formyl-L-methionyl-[peptide] + H2O = N-terminal L-methionyl-[peptide] + formate. In terms of biological role, removes the formyl group from the N-terminal Met of newly synthesized proteins. Requires at least a dipeptide for an efficient rate of reaction. N-terminal L-methionine is a prerequisite for activity but the enzyme has broad specificity at other positions. In Bartonella bacilliformis (strain ATCC 35685 / KC583 / Herrer 020/F12,63), this protein is Peptide deformylase.